The chain runs to 321 residues: Glucokinase (321 aa).

8–13 (GDVGGT) is an ATP binding site.

It belongs to the bacterial glucokinase family.

The protein resides in the cytoplasm. It catalyses the reaction D-glucose + ATP = D-glucose 6-phosphate + ADP + H(+). This Shigella sonnei (strain Ss046) protein is Glucokinase.